Here is a 413-residue protein sequence, read N- to C-terminus: Methylaspartate ammonia-lyase (413 aa).

Gln-172 is a binding site for (2S,3S)-3-methyl-L-aspartate. Residues Asp-238, Glu-273, and Asp-307 each coordinate Mg(2+). Residue Gln-329 coordinates (2S,3S)-3-methyl-L-aspartate. The Proton acceptor role is filled by Lys-331. Position 360-361 (360-361 (TC)) interacts with (2S,3S)-3-methyl-L-aspartate.

Belongs to the methylaspartate ammonia-lyase family. As to quaternary structure, homodimer. Requires Mg(2+) as cofactor.

It catalyses the reaction (2S,3S)-3-methyl-L-aspartate = mesaconate + NH4(+). It participates in amino-acid degradation; L-glutamate degradation via mesaconate pathway; acetate and pyruvate from L-glutamate: step 2/4. Functionally, involved in the methylaspartate cycle. Catalyzes the formation of the alpha,beta-unsaturated bond by the reversible anti elimination of ammonia from L-threo-beta-methylaspartate (L-threo-(2S,3S)-3-methylaspartate) to give mesaconate. In Citrobacter amalonaticus, this protein is Methylaspartate ammonia-lyase.